A 387-amino-acid polypeptide reads, in one-letter code: Alkanesulfonate monooxygenase (387 aa).

Residues 365–387 (HNSGPFGETVGNDYRPSRLASQS) are disordered.

It belongs to the SsuD family.

The catalysed reaction is an alkanesulfonate + FMNH2 + O2 = an aldehyde + FMN + sulfite + H2O + 2 H(+). Catalyzes the desulfonation of aliphatic sulfonates. The chain is Alkanesulfonate monooxygenase from Bradyrhizobium diazoefficiens (strain JCM 10833 / BCRC 13528 / IAM 13628 / NBRC 14792 / USDA 110).